A 170-amino-acid chain; its full sequence is Putative phosphoesterase OB1230 (170 aa).

H34 (proton donor) is an active-site residue. Short sequence motifs (HXTX) lie at residues 34–37 (HLTL) and 115–118 (HITI). H115 (proton acceptor) is an active-site residue.

This sequence belongs to the 2H phosphoesterase superfamily. YjcG family.

This chain is Putative phosphoesterase OB1230, found in Oceanobacillus iheyensis (strain DSM 14371 / CIP 107618 / JCM 11309 / KCTC 3954 / HTE831).